The sequence spans 710 residues: Methionine--tRNA ligase (710 aa).

Positions 16–26 (PYANGAFHIGH) match the 'HIGH' region motif. 4 residues coordinate Zn(2+): Cys147, Cys150, Cys160, and Cys163. Residues 350–354 (KMSKS) carry the 'KMSKS' region motif. Residue Lys353 participates in ATP binding. The tRNA-binding domain occupies 604–710 (DFAKIDLRIA…PGAEPGMRVG (107 aa)).

The protein belongs to the class-I aminoacyl-tRNA synthetase family. MetG type 1 subfamily. Homodimer. The cofactor is Zn(2+).

It is found in the cytoplasm. The enzyme catalyses tRNA(Met) + L-methionine + ATP = L-methionyl-tRNA(Met) + AMP + diphosphate. Functionally, is required not only for elongation of protein synthesis but also for the initiation of all mRNA translation through initiator tRNA(fMet) aminoacylation. This is Methionine--tRNA ligase from Herminiimonas arsenicoxydans.